Reading from the N-terminus, the 80-residue chain is Trefoil factor 3 (80 aa).

Positions 1-21 (MAARALCMLGLVLALLSSSSA) are cleaved as a signal peptide. The P-type domain occupies 30–73 (NQCAVPAKDRVDCGYPHVTPKECNNRGCCFDSRIPGVPWCFKPL). Cystine bridges form between Cys32–Cys58, Cys42–Cys57, and Cys52–Cys69.

Monomer. Homodimer; disulfide-linked. As to expression, expressed in goblet cells of the intestines and colon (at protein level). Expressed by goblet cells of small and large intestinal epithelia and also by the uterus. Also expressed in the hypothalamus where it is detected in paraventricular, periventricular and supraoptic nuclei (at protein level).

Its subcellular location is the secreted. The protein localises to the extracellular space. The protein resides in the extracellular matrix. It is found in the cytoplasm. Its function is as follows. Involved in the maintenance and repair of the intestinal mucosa. Promotes the mobility of epithelial cells in healing processes (motogen). This Homo sapiens (Human) protein is Trefoil factor 3 (TFF3).